We begin with the raw amino-acid sequence, 343 residues long: MGSADERRFEVLRAIVADFVATQEPIGSKSLVERHNLGVSSATVRNDMAVLEAEGYITQPHTSSGRVPTEKGYREFVDRLEDVKPLSSAERRAIQSFLESGVDLDDVLRRAVRLLAQLTRQVAVVQYPTLSTSTVRHLEVIALTPARLLMVVITDSGRVDQRIVELGDVIDDHQLAQLREILGQALEGKKLSAASVAVADLASQLGGAGGLGDAVGRAATVLLESLVEHTEERLLLGGTANLTRNAADFGGSLRSILEALEEQVVVLRLLAAQQEAGKVTVRIGHETASEQMVGTSMVSTAYGTAHTVYGGMGVVGPTRMDYPGTIASVAAVALYIGDVLGAR.

The protein belongs to the HrcA family.

Functionally, negative regulator of class I heat shock genes (grpE-dnaK-dnaJ and groELS operons). Prevents heat-shock induction of these operons. This chain is Heat-inducible transcription repressor HrcA, found in Mycobacterium tuberculosis (strain ATCC 25177 / H37Ra).